A 275-amino-acid polypeptide reads, in one-letter code: Autophagy protein 5 (275 aa).

Methionine 1 is subject to N-acetylmethionine. A Glycyl lysine isopeptide (Lys-Gly) (interchain with G-Cter in ATG12) cross-link involves residue lysine 130.

This sequence belongs to the ATG5 family. In terms of assembly, forms a conjugate with ATG12. Part of the minor complex composed of 4 sets of ATG12-ATG5 and ATG16L1 (400 kDa); this complex interacts with ATG3 leading to disruption of ATG7 interaction and promotion of ATG8-like proteins lipidation. Forms an 800-kDa complex composed of ATG12-ATG5 and ATG16L2. The ATG12-ATG5 conjugate interacts with RAB33A; this interaction is bridged by ATG16L1 and promotes ATG12-ATG5-ATG16L1 complex recruitment to phagophores. Interacts with TECPR1; the interaction is direct and does not take place when ATG16L1 is associated with the ATG5-ATG12 conjugate. Interacts with DHX58/RIG-1, IFIH1/MDA5 and MAVS/IPS-1 in monomeric form as well as in ATG12-ATG5 conjugate form. The interaction with MAVS is further enhanced upon vesicular stomatitis virus (VSV) infection. Interacts with ATG3. Interacts with ATG7 and ATG10. Interacts with FADD. Interacts with Bassoon/BSN; this interaction is important for the regulation of presynaptic autophagy. Interacts with ATG16L2. In terms of processing, conjugated to ATG12; which is essential for autophagy, but is not required for association with isolation membrane. Acetylated by EP300.

It is found in the cytoplasm. It localises to the preautophagosomal structure membrane. In terms of biological role, involved in autophagic vesicle formation. Conjugation with ATG12, through a ubiquitin-like conjugating system involving ATG7 as an E1-like activating enzyme and ATG10 as an E2-like conjugating enzyme, is essential for its function. The ATG12-ATG5 conjugate acts as an E3-like enzyme which is required for lipidation of ATG8 family proteins and their association to the vesicle membranes. Involved in mitochondrial quality control after oxidative damage, and in subsequent cellular longevity. Plays a critical role in multiple aspects of lymphocyte development and is essential for both B and T lymphocyte survival and proliferation. Required for optimal processing and presentation of antigens for MHC II. Involved in the maintenance of axon morphology and membrane structures, as well as in normal adipocyte differentiation. Promotes primary ciliogenesis through removal of OFD1 from centriolar satellites and degradation of IFT20 via the autophagic pathway. As part of the ATG8 conjugation system with ATG12 and ATG16L1, required for recruitment of LRRK2 to stressed lysosomes and induction of LRRK2 kinase activity in response to lysosomal stress. May play an important role in the apoptotic process, possibly within the modified cytoskeleton. Its expression is a relatively late event in the apoptotic process, occurring downstream of caspase activity. Plays a crucial role in IFN-gamma-induced autophagic cell death by interacting with FADD. The chain is Autophagy protein 5 from Pongo abelii (Sumatran orangutan).